The following is a 64-amino-acid chain: Small ribosomal subunit protein bS21 (64 aa).

The protein belongs to the bacterial ribosomal protein bS21 family.

This Pelagibacter ubique (strain HTCC1062) protein is Small ribosomal subunit protein bS21.